The primary structure comprises 513 residues: Maturase K (513 aa).

Belongs to the intron maturase 2 family. MatK subfamily.

Its subcellular location is the plastid. The protein localises to the chloroplast. Its function is as follows. Usually encoded in the trnK tRNA gene intron. Probably assists in splicing its own and other chloroplast group II introns. This Keckiella cordifolia (Heart-leafed penstemon) protein is Maturase K.